We begin with the raw amino-acid sequence, 231 residues long: MSQPRQTRTFVRREGRLTQGQQRALEGLWPQFGVDVPERGVIDLDGLFGRAAPRVLDIGFGDGEALVEMAAADPERDYLGVEVHRPGVGHCLLCAEQAGLDNLRVATVDAVELVRHHLPGPSLETVQIFFPDPWPKKRHHKRRIIQPAFLDLLAERLVPGGALHLATDWADYAEWMLDTLEADARFENTCGPRAFVPPPPPRPQTKFERRGLRKGHQVHDLIYRLRPDTAG.

4 residues coordinate S-adenosyl-L-methionine: Asp-57, Glu-82, Asp-109, and Asp-132. Residue Asp-132 is part of the active site. Substrate-binding positions include Lys-136, Asp-168, and 205 to 208; that span reads TKFE. The interval 194 to 214 is disordered; that stretch reads AFVPPPPPRPQTKFERRGLRK.

The protein belongs to the class I-like SAM-binding methyltransferase superfamily. TrmB family.

It catalyses the reaction guanosine(46) in tRNA + S-adenosyl-L-methionine = N(7)-methylguanosine(46) in tRNA + S-adenosyl-L-homocysteine. The protein operates within tRNA modification; N(7)-methylguanine-tRNA biosynthesis. Functionally, catalyzes the formation of N(7)-methylguanine at position 46 (m7G46) in tRNA. In Halorhodospira halophila (strain DSM 244 / SL1) (Ectothiorhodospira halophila (strain DSM 244 / SL1)), this protein is tRNA (guanine-N(7)-)-methyltransferase.